The sequence spans 190 residues: UPF0301 protein Pfl01_5311 (190 aa).

It belongs to the UPF0301 (AlgH) family.

The chain is UPF0301 protein Pfl01_5311 from Pseudomonas fluorescens (strain Pf0-1).